Here is a 393-residue protein sequence, read N- to C-terminus: NAD(P)H-quinone oxidoreductase subunit H, chloroplastic (393 aa).

This sequence belongs to the complex I 49 kDa subunit family. In terms of assembly, NDH is composed of at least 16 different subunits, 5 of which are encoded in the nucleus.

It is found in the plastid. The protein localises to the chloroplast thylakoid membrane. It catalyses the reaction a plastoquinone + NADH + (n+1) H(+)(in) = a plastoquinol + NAD(+) + n H(+)(out). The catalysed reaction is a plastoquinone + NADPH + (n+1) H(+)(in) = a plastoquinol + NADP(+) + n H(+)(out). Functionally, NDH shuttles electrons from NAD(P)H:plastoquinone, via FMN and iron-sulfur (Fe-S) centers, to quinones in the photosynthetic chain and possibly in a chloroplast respiratory chain. The immediate electron acceptor for the enzyme in this species is believed to be plastoquinone. Couples the redox reaction to proton translocation, and thus conserves the redox energy in a proton gradient. In Nicotiana tomentosiformis (Tobacco), this protein is NAD(P)H-quinone oxidoreductase subunit H, chloroplastic.